Reading from the N-terminus, the 135-residue chain is ATP synthase epsilon chain 1 (135 aa).

Belongs to the ATPase epsilon chain family. As to quaternary structure, F-type ATPases have 2 components, CF(1) - the catalytic core - and CF(0) - the membrane proton channel. CF(1) has five subunits: alpha(3), beta(3), gamma(1), delta(1), epsilon(1). CF(0) has three main subunits: a, b and c.

Its subcellular location is the cell inner membrane. Produces ATP from ADP in the presence of a proton gradient across the membrane. This Nitrobacter hamburgensis (strain DSM 10229 / NCIMB 13809 / X14) protein is ATP synthase epsilon chain 1.